Consider the following 37-residue polypeptide: Large ribosomal subunit protein bL36 (37 aa).

Belongs to the bacterial ribosomal protein bL36 family.

In Dictyoglomus thermophilum (strain ATCC 35947 / DSM 3960 / H-6-12), this protein is Large ribosomal subunit protein bL36.